The following is a 257-amino-acid chain: DNA repair protein RecO (257 aa).

The protein belongs to the RecO family.

Involved in DNA repair and RecF pathway recombination. The chain is DNA repair protein RecO from Streptococcus thermophilus (strain CNRZ 1066).